The primary structure comprises 555 residues: Genome polyprotein (555 aa).

Topologically, residues lysine 1 to glutamate 7 are extracellular. The chain crosses the membrane as a helical span at residues threonine 8–glycine 28. Topologically, residues threonine 29 to arginine 34 are cytoplasmic. The helical transmembrane segment at alanine 35–threonine 49 threads the bilayer. At methionine 50–glycine 494 the chain is on the extracellular side. 4 disulfides stabilise this stretch: cysteine 52–cysteine 79, cysteine 109–cysteine 170, cysteine 123–cysteine 154, and cysteine 141–cysteine 165. Asparagine 116 carries an N-linked (GlcNAc...) asparagine; by host glycan. The interval aspartate 147 to glycine 160 is fusion peptide. Asparagine 202 carries N-linked (GlcNAc...) asparagine; by host glycosylation. 2 cysteine pairs are disulfide-bonded: cysteine 234/cysteine 334 and cysteine 351/cysteine 382. The chain crosses the membrane as a helical span at residues alanine 495–isoleucine 515. The Cytoplasmic segment spans residues glycine 516–serine 521. Residues threonine 522–valine 542 traverse the membrane as a helical segment. The Extracellular portion of the chain corresponds to glutamine 543–lysine 555.

As to quaternary structure, homodimer; in the endoplasmic reticulum and Golgi. Interacts with protein prM. Interacts with non-structural protein 1. In terms of assembly, homodimer; Homohexamer when secreted. Interacts with envelope protein E. In terms of processing, N-glycosylated. Post-translationally, N-glycosylated. The excreted form is glycosylated and this is required for efficient secretion of the protein from infected cells. Specific enzymatic cleavages in vivo yield mature proteins. Cleavages in the lumen of endoplasmic reticulum are performed by host signal peptidase, wereas cleavages in the cytoplasmic side are performed by serine protease NS3. Signal cleavage at the 2K-4B site requires a prior NS3 protease-mediated cleavage at the 4A-2K site.

Its subcellular location is the virion membrane. The protein localises to the host endoplasmic reticulum membrane. The protein resides in the secreted. In terms of biological role, may play a role in virus budding. Exerts cytotoxic effects by activating a mitochondrial apoptotic pathway through M ectodomain. May display a viroporin activity. Functionally, binds to host cell surface receptor and mediates fusion between viral and cellular membranes. Envelope protein is synthesized in the endoplasmic reticulum in the form of heterodimer with protein prM. They play a role in virion budding in the ER, and the newly formed immature particle is covered with 60 spikes composed of heterodimer between precursor prM and envelope protein E. The virion is transported to the Golgi apparatus where the low pH causes dissociation of PrM-E heterodimers and formation of E homodimers. prM-E cleavage is inefficient, and many virions are only partially matured. These uncleaved prM would play a role in immune evasion. Involved in immune evasion, pathogenesis and viral replication. Once cleaved off the polyprotein, is targeted to three destinations: the viral replication cycle, the plasma membrane and the extracellular compartment. Essential for viral replication. Required for formation of the replication complex and recruitment of other non-structural proteins to the ER-derived membrane structures. Excreted as a hexameric lipoparticle that plays a role against host immune response. Antagonizing the complement function. Binds to the host macrophages and dendritic cells. Inhibits signal transduction originating from Toll-like receptor 3 (TLR3). Its function is as follows. Disrupts the host endothelial glycocalyx layer of host pulmonary microvascular endothelial cells, inducing degradation of sialic acid and shedding of heparan sulfate proteoglycans. NS1 induces expression of sialidases, heparanase, and activates cathepsin L, which activates heparanase via enzymatic cleavage. These effects are probably linked to the endothelial hyperpermeability observed in severe dengue disease. The chain is Genome polyprotein from Dengue virus type 2 (strain Thailand/TH-36/1958) (DENV-2).